A 349-amino-acid chain; its full sequence is Probable protease SohB (349 aa).

The Periplasmic segment spans residues 1-8 (MELLSEYG). The chain crosses the membrane as a helical span at residues 9–29 (LFLAKIVTVVLAIAAIAAIIV). Residues 30-349 (NVAQRNKRQR…WWQRGQKPLM (320 aa)) lie on the Cytoplasmic side of the membrane. The active-site Nucleophile is serine 178. Lysine 230 functions as the Proton donor/acceptor in the catalytic mechanism.

It belongs to the peptidase S49 family.

Its subcellular location is the cell inner membrane. In terms of biological role, multicopy suppressor of the HtrA (DegP) null phenotype. It is possibly a protease, not essential for bacterial viability. This is Probable protease SohB (sohB) from Escherichia coli (strain K12).